The primary structure comprises 167 residues: Translationally-controlled tumor protein homolog (167 aa).

One can recognise a TCTP domain in the interval 1–167 (MLIFEDVISG…WKHGVKENKI (167 aa)).

The protein belongs to the TCTP family.

The protein resides in the cytoplasm. The protein localises to the cytoskeleton. In terms of biological role, involved in protein synthesis. Involved in microtubule stabilization. The chain is Translationally-controlled tumor protein homolog (TMA19) from Candida albicans (strain SC5314 / ATCC MYA-2876) (Yeast).